A 914-amino-acid chain; its full sequence is Dynamin-2A (914 aa).

Methionine 1 carries the N-acetylmethionine modification. The Dynamin-type G domain occupies 35–303; the sequence is PATFLNVVAL…IRSRMKLRLP (269 aa). The G1 motif stretch occupies residues 45 to 52; the sequence is GNVGAGKS. 45–52 serves as a coordination point for GTP; it reads GNVGAGKS. Residues 71–73 are G2 motif; the sequence is ATR. Residues 143 to 146 form a G3 motif region; it reads DLPG. GTP contacts are provided by residues 143–147 and 204–207; these read DLPGL and GKID. Residues 204 to 207 are G4 motif; it reads GKID. The interval 238-241 is G5 motif; it reads AVIG. The span at 507-522 shows a compositional bias: basic and acidic residues; that stretch reads RREEELKGRSSKKGQD. Disordered stretches follow at residues 507 to 570 and 629 to 648; these read RREE…TAGP and PEDE…NGPD. Residues 523–535 show a composition bias toward polar residues; the sequence is AEQSLLSRATSPQ. 2 stretches are compositionally biased toward basic and acidic residues: residues 547–560 and 634–645; these read SMKD…KETP and EKSKSSKDKKAN. The region spanning 572–696 is the PH domain; that stretch reads GEITAGYLMK…WINKLQKVIQ (125 aa). A GED domain is found at 730–823; the sequence is LRWMSQEVRG…QLSIHDNRAA (94 aa). Residues 781–805 are a coiled coil; it reads NERIESLIQEDQNVKRRRERYQKQS. The segment at 821–914 is disordered; it reads RAAAASSYSD…PPPTGSAYRY (94 aa). 2 stretches are compositionally biased toward polar residues: residues 826–839 and 852–866; these read SSYS…SSPR and AFNS…SLSK.

This sequence belongs to the TRAFAC class dynamin-like GTPase superfamily. Dynamin/Fzo/YdjA family. Binds PtdIns3P. Interacts with SH3P3 (via SH3 domain) and (via C-terminus) with GAMMA-ADR. May homooligomerize or heterooligomerize.

The protein resides in the cytoplasm. Its subcellular location is the cytosol. It is found in the golgi apparatus membrane. The protein localises to the cytoskeleton. It localises to the phragmoplast. The protein resides in the cytoplasmic vesicle. Its subcellular location is the clathrin-coated vesicle. The enzyme catalyses GTP + H2O = GDP + phosphate + H(+). Increased GTPase activity in the presence of phosphatidic acid. Microtubule-associated force-producing protein involved in clathrin-mediated vesicle trafficking from the trans-Golgi network to the central vacuole. Able to bind and hydrolyze GTP. Binds specifically to phosphatidylinositol 3-phosphate (PtdIns3P). The protein is Dynamin-2A (DRP2A) of Arabidopsis thaliana (Mouse-ear cress).